Reading from the N-terminus, the 301-residue chain is Tyrosine recombinase XerD (301 aa).

Positions 7 to 90 (QFHTTILEQF…ALKVFFLFLK (84 aa)) constitute a Core-binding (CB) domain. A Tyr recombinase domain is found at 109–294 (RLPSVLTPQE…AADSLIEKFL (186 aa)). Catalysis depends on residues R153, K175, H246, R249, and H272. The active-site O-(3'-phospho-DNA)-tyrosine intermediate is Y281.

This sequence belongs to the 'phage' integrase family. XerD subfamily. As to quaternary structure, forms a cyclic heterotetrameric complex composed of two molecules of XerC and two molecules of XerD.

It localises to the cytoplasm. Its function is as follows. Site-specific tyrosine recombinase, which acts by catalyzing the cutting and rejoining of the recombining DNA molecules. The XerC-XerD complex is essential to convert dimers of the bacterial chromosome into monomers to permit their segregation at cell division. It also contributes to the segregational stability of plasmids. This Chlamydia pneumoniae (Chlamydophila pneumoniae) protein is Tyrosine recombinase XerD.